The following is a 109-amino-acid chain: Large ribosomal subunit protein uL24 (109 aa).

The tract at residues 85–109 (KYGTDPKTNKKVRLSRKTNNLVGGQ) is disordered.

It belongs to the universal ribosomal protein uL24 family. As to quaternary structure, part of the 50S ribosomal subunit.

Functionally, one of two assembly initiator proteins, it binds directly to the 5'-end of the 23S rRNA, where it nucleates assembly of the 50S subunit. Its function is as follows. One of the proteins that surrounds the polypeptide exit tunnel on the outside of the subunit. This chain is Large ribosomal subunit protein uL24, found in Mycoplasmoides gallisepticum (strain R(low / passage 15 / clone 2)) (Mycoplasma gallisepticum).